Here is a 309-residue protein sequence, read N- to C-terminus: Cytochrome c biogenesis protein CcsA (309 aa).

8 helical membrane passes run 18 to 38 (LGILVFYILLVNLPISLGAVF), 43 to 63 (FFIVKLLTILVNLLITLQLLF), 67 to 87 (ISGHFPVSNLYESLYFLAWGI), 102 to 122 (IIPSIAIPIELLTVAFACFVL), 148 to 168 (VMLSYAALIIGSLLSASVLFI), 216 to 236 (SILIGFVLLTLGLISGAVWAN), 250 to 267 (TWAFITWLFYAAYLHMRI), and 279 to 299 (LATSGFLVVIVCYLGVNFLGI).

Belongs to the CcmF/CycK/Ccl1/NrfE/CcsA family. May interact with ccs1.

Its subcellular location is the cellular thylakoid membrane. In terms of biological role, required during biogenesis of c-type cytochromes (cytochrome c6 and cytochrome f) at the step of heme attachment. The chain is Cytochrome c biogenesis protein CcsA from Prochlorococcus marinus (strain MIT 9312).